The following is an 838-amino-acid chain: Leucine--tRNA ligase (838 aa).

The 'HIGH' region motif lies at 38–48 (PYPSGKAHVGH). Positions 608–612 (KMSKS) match the 'KMSKS' region motif. Residue lysine 611 coordinates ATP.

This sequence belongs to the class-I aminoacyl-tRNA synthetase family.

It localises to the cytoplasm. The enzyme catalyses tRNA(Leu) + L-leucine + ATP = L-leucyl-tRNA(Leu) + AMP + diphosphate. This is Leucine--tRNA ligase from Orientia tsutsugamushi (strain Boryong) (Rickettsia tsutsugamushi).